The primary structure comprises 1187 residues: DNA-directed RNA polymerase subunit beta (1187 aa).

It belongs to the RNA polymerase beta chain family. The RNAP catalytic core consists of 2 alpha, 1 beta, 1 beta' and 1 omega subunit. When a sigma factor is associated with the core the holoenzyme is formed, which can initiate transcription.

The catalysed reaction is RNA(n) + a ribonucleoside 5'-triphosphate = RNA(n+1) + diphosphate. In terms of biological role, DNA-dependent RNA polymerase catalyzes the transcription of DNA into RNA using the four ribonucleoside triphosphates as substrates. This Streptococcus mutans serotype c (strain ATCC 700610 / UA159) protein is DNA-directed RNA polymerase subunit beta.